Here is a 279-residue protein sequence, read N- to C-terminus: Phosphate import ATP-binding protein PstB 2 (279 aa).

An ABC transporter domain is found at 34–274 (FDIENLDLYY…PSDDRTRGYV (241 aa)). 66 to 73 (GPSGCGKS) provides a ligand contact to ATP.

The protein belongs to the ABC transporter superfamily. Phosphate importer (TC 3.A.1.7) family. In terms of assembly, the complex is composed of two ATP-binding proteins (PstB), two transmembrane proteins (PstC and PstA) and a solute-binding protein (PstS).

It localises to the cell inner membrane. The enzyme catalyses phosphate(out) + ATP + H2O = ADP + 2 phosphate(in) + H(+). Part of the ABC transporter complex PstSACB involved in phosphate import. Responsible for energy coupling to the transport system. This Vibrio vulnificus (strain YJ016) protein is Phosphate import ATP-binding protein PstB 2.